The primary structure comprises 89 residues: Double-stranded DNA-binding protein (89 aa).

Homodimer.

Its function is as follows. May play a role in transcription of several T4 genes. Binds double-stranded DNA and interacts preferentially with T4 late promoter regions. This Enterobacteria phage T4 (Bacteriophage T4) protein is Double-stranded DNA-binding protein (dsbA).